Here is a 472-residue protein sequence, read N- to C-terminus: Chromosomal replication initiator protein DnaA (472 aa).

The tract at residues 1 to 80 (MDTKQIWFTT…YQVNVRVIIS (80 aa)) is domain I, interacts with DnaA modulators. The tract at residues 80-130 (SSATPAPSEPVAVTPSEPSPTTEVAEPSFASFNQAAPMLNQLPLGDPNRSS) is domain II. The interval 131-347 (VLNPRYTFSS…GCLNRVIAYA (217 aa)) is domain III, AAA+ region. ATP contacts are provided by G175, G177, K178, and T179. The domain IV, binds dsDNA stretch occupies residues 348 to 472 (NLNRTPVTVE…RQRLYGENAR (125 aa)).

Belongs to the DnaA family. In terms of assembly, oligomerizes as a right-handed, spiral filament on DNA at oriC.

It is found in the cytoplasm. Functionally, plays an essential role in the initiation and regulation of chromosomal replication. ATP-DnaA binds to the origin of replication (oriC) to initiate formation of the DNA replication initiation complex once per cell cycle. Binds the DnaA box (a 9 base pair repeat at the origin) and separates the double-stranded (ds)DNA. Forms a right-handed helical filament on oriC DNA; dsDNA binds to the exterior of the filament while single-stranded (ss)DNA is stabiized in the filament's interior. The ATP-DnaA-oriC complex binds and stabilizes one strand of the AT-rich DNA unwinding element (DUE), permitting loading of DNA polymerase. After initiation quickly degrades to an ADP-DnaA complex that is not apt for DNA replication. Binds acidic phospholipids. This Herpetosiphon aurantiacus (strain ATCC 23779 / DSM 785 / 114-95) protein is Chromosomal replication initiator protein DnaA.